Consider the following 301-residue polypeptide: Acetyl-coenzyme A carboxylase carboxyl transferase subunit beta (301 aa).

Residues 25–294 (LWIKCPETGE…SAANDMNSGA (270 aa)) enclose the CoA carboxyltransferase N-terminal domain.

It belongs to the AccD/PCCB family. In terms of assembly, acetyl-CoA carboxylase is a heterohexamer composed of biotin carboxyl carrier protein (AccB), biotin carboxylase (AccC) and two subunits each of ACCase subunit alpha (AccA) and ACCase subunit beta (AccD).

Its subcellular location is the cytoplasm. It catalyses the reaction N(6)-carboxybiotinyl-L-lysyl-[protein] + acetyl-CoA = N(6)-biotinyl-L-lysyl-[protein] + malonyl-CoA. It functions in the pathway lipid metabolism; malonyl-CoA biosynthesis; malonyl-CoA from acetyl-CoA: step 1/1. Its function is as follows. Component of the acetyl coenzyme A carboxylase (ACC) complex. Biotin carboxylase (BC) catalyzes the carboxylation of biotin on its carrier protein (BCCP) and then the CO(2) group is transferred by the transcarboxylase to acetyl-CoA to form malonyl-CoA. The polypeptide is Acetyl-coenzyme A carboxylase carboxyl transferase subunit beta (Rhizobium leguminosarum bv. trifolii (strain WSM1325)).